The chain runs to 91 residues: Acyl carrier protein (91 aa).

One can recognise a Carrier domain in the interval 4–79 (QQILDKVQSI…QAVDYILQHK (76 aa)). S39 is modified (O-(pantetheine 4'-phosphoryl)serine).

It belongs to the acyl carrier protein (ACP) family. 4'-phosphopantetheine is transferred from CoA to a specific serine of apo-ACP by AcpS. This modification is essential for activity because fatty acids are bound in thioester linkage to the sulfhydryl of the prosthetic group.

It is found in the plastid. Its subcellular location is the chloroplast. It participates in lipid metabolism; fatty acid biosynthesis. Its function is as follows. Carrier of the growing fatty acid chain in fatty acid biosynthesis. This is Acyl carrier protein from Cyanidioschyzon merolae (strain NIES-3377 / 10D) (Unicellular red alga).